Consider the following 489-residue polypeptide: Ubiquitin-like-specific protease ESD4 (489 aa).

Positions 43–66 are disordered; that stretch reads AMSEDSGKPASSNPTISRISRYPD. Polar residues predominate over residues 51–60; the sequence is PASSNPTISR. A coiled-coil region spans residues 200-223; sequence ASSLEAYRKLMQSAEKRNSKLEAL. Active-site residues include histidine 380, aspartate 397, and cysteine 448.

The protein belongs to the peptidase C48 family. Interacts with NUA (via N-terminus). Interacts with KIN10. Expressed in seedlings, leaves, shoots, flowers and roots.

It localises to the nucleus membrane. The catalysed reaction is Hydrolysis of the alpha-linked peptide bond in the sequence Gly-Gly-|-Ala-Thr-Tyr at the C-terminal end of the small ubiquitin-like modifier (SUMO) propeptide, Smt3, leading to the mature form of the protein. A second reaction involves the cleavage of an epsilon-linked peptide bond between the C-terminal glycine of the mature SUMO and the lysine epsilon-amino group of the target protein.. Its activity is regulated as follows. Inhibited by thiol reagent and N-ethylmaleimide, but not by ubiquitin aldehyde, pepstatin A or benzamidine HCl. Functionally, protease that catalyzes two essential functions in the SUMO pathway: processing of full-length SUMOs to their mature forms and deconjugation of SUMO from targeted proteins. Cleaves precursors of SUM1 and SUM2, but not of SUM3 or SUM5. Able to release SUM1 and SUM2 from conjugates, but unable to cleave SUM3. Acts predominantly as an isopeptidase, cleaving SUMO-conjugated proteins better than SUMO peptides. Plays an important role in the control of flowering time. The polypeptide is Ubiquitin-like-specific protease ESD4 (ESD4) (Arabidopsis thaliana (Mouse-ear cress)).